Consider the following 414-residue polypeptide: Probable solanesyl-diphosphate synthase 3, chloroplastic (414 aa).

The segment covering 1–23 (MAAPSSLASSSHLSRRATAAASP) has biased composition (low complexity). The segment at 1 to 36 (MAAPSSLASSSHLSRRATAAASPSIPPPSPPPPPQR) is disordered. Residues 1-72 (MAAPSSLASS…KPGVAAVDVP (72 aa)) constitute a chloroplast transit peptide. Residues 24–35 (SIPPPSPPPPPQ) are compositionally biased toward pro residues. Isopentenyl diphosphate is bound by residues K134, R137, and H172. The Mg(2+) site is built by D179 and D183. Residue R188 participates in an all-trans-polyprenyl diphosphate binding. R189 is a binding site for isopentenyl diphosphate. 4 residues coordinate an all-trans-polyprenyl diphosphate: K265, T266, Q303, and K320.

It belongs to the FPP/GGPP synthase family. As to quaternary structure, homodimer. Mg(2+) serves as cofactor.

Its subcellular location is the plastid. The protein localises to the chloroplast. It carries out the reaction 7 isopentenyl diphosphate + (2E)-geranyl diphosphate = all-trans-nonaprenyl diphosphate + 7 diphosphate. Involved in providing solanesyl diphosphate for plastoquinone-9 (PQ-9) formation. In Oryza sativa subsp. japonica (Rice), this protein is Probable solanesyl-diphosphate synthase 3, chloroplastic.